A 403-amino-acid chain; its full sequence is Phosphopentomutase (403 aa).

Residues Asp-13, Asp-298, His-303, Asp-339, His-340, and His-351 each coordinate Mn(2+).

This sequence belongs to the phosphopentomutase family. Mn(2+) serves as cofactor.

The protein localises to the cytoplasm. It carries out the reaction 2-deoxy-alpha-D-ribose 1-phosphate = 2-deoxy-D-ribose 5-phosphate. It catalyses the reaction alpha-D-ribose 1-phosphate = D-ribose 5-phosphate. The protein operates within carbohydrate degradation; 2-deoxy-D-ribose 1-phosphate degradation; D-glyceraldehyde 3-phosphate and acetaldehyde from 2-deoxy-alpha-D-ribose 1-phosphate: step 1/2. In terms of biological role, isomerase that catalyzes the conversion of deoxy-ribose 1-phosphate (dRib-1-P) and ribose 1-phosphate (Rib-1-P) to deoxy-ribose 5-phosphate (dRib-5-P) and ribose 5-phosphate (Rib-5-P), respectively. This is Phosphopentomutase from Streptococcus thermophilus (strain CNRZ 1066).